A 143-amino-acid chain; its full sequence is Pathogenesis-related protein P2 (143 aa).

Residues 1–23 form the signal peptide; the sequence is MERVNKLCVAFFVINMMMAVAAA. The Barwin domain maps to 24–143; sequence QSATNVRATY…LNVNYEFVNC (120 aa). 3 disulfides stabilise this stretch: cysteine 52–cysteine 84, cysteine 73–cysteine 107, and cysteine 87–cysteine 143.

The protein localises to the secreted. It is found in the cell wall. The polypeptide is Pathogenesis-related protein P2 (Solanum lycopersicum (Tomato)).